The chain runs to 218 residues: PKHD-type hydroxylase Sala_1910 (218 aa).

Residues 74–172 (RIAPPLLTRY…RLVAITFIQS (99 aa)) form the Fe2OG dioxygenase domain. 3 residues coordinate Fe cation: His92, Asp94, and His153. Position 163 (Arg163) interacts with 2-oxoglutarate.

Fe(2+) serves as cofactor. It depends on L-ascorbate as a cofactor.

The sequence is that of PKHD-type hydroxylase Sala_1910 from Sphingopyxis alaskensis (strain DSM 13593 / LMG 18877 / RB2256) (Sphingomonas alaskensis).